A 263-amino-acid chain; its full sequence is Inactive adenylate kinase (263 aa).

The protein belongs to the adenylate kinase family.

Its subcellular location is the cytoplasm. Lacks adenylate kinase activity. This chain is Inactive adenylate kinase, found in Plasmodium falciparum (isolate 3D7).